We begin with the raw amino-acid sequence, 145 residues long: MRHRVSGRKLNRTTSHLLAMLANMSVSLIQHEQINTTLPKAKELRPFVEKLITVAKKGNLNARRYLISKIKNELAVEKLMTTLAPRYAERHGGYIRILKAGFRYGDMAPMAYIEFVDRNIESKGKEFKALKNDSRNAKLIAEQSN.

This sequence belongs to the bacterial ribosomal protein bL17 family. Part of the 50S ribosomal subunit. Contacts protein L32.

In Orientia tsutsugamushi (strain Ikeda) (Rickettsia tsutsugamushi), this protein is Large ribosomal subunit protein bL17.